Here is a 305-residue protein sequence, read N- to C-terminus: Tyrosine recombinase XerC (305 aa).

Residues 4-95 form the Core-binding (CB) domain; that stretch reads TQIQELIIKW…AIKNFYKFLE (92 aa). Residues 116-298 form the Tyr recombinase domain; it reads LLPKALSEEE…SIKHLETAYV (183 aa). Catalysis depends on residues Arg159, Lys182, His250, Arg253, and His276. The O-(3'-phospho-DNA)-tyrosine intermediate role is filled by Tyr285.

This sequence belongs to the 'phage' integrase family. XerC subfamily. Forms a cyclic heterotetrameric complex composed of two molecules of XerC and two molecules of XerD.

The protein resides in the cytoplasm. Its function is as follows. Site-specific tyrosine recombinase, which acts by catalyzing the cutting and rejoining of the recombining DNA molecules. The XerC-XerD complex is essential to convert dimers of the bacterial chromosome into monomers to permit their segregation at cell division. It also contributes to the segregational stability of plasmids. The sequence is that of Tyrosine recombinase XerC from Rickettsia bellii (strain RML369-C).